We begin with the raw amino-acid sequence, 90 residues long: Probable Fe(2+)-trafficking protein (90 aa).

Belongs to the Fe(2+)-trafficking protein family.

Could be a mediator in iron transactions between iron acquisition and iron-requiring processes, such as synthesis and/or repair of Fe-S clusters in biosynthetic enzymes. In Paraburkholderia xenovorans (strain LB400), this protein is Probable Fe(2+)-trafficking protein.